Reading from the N-terminus, the 134-residue chain is Cytochrome b (134 aa).

3 consecutive transmembrane segments (helical) span residues 33 to 53 (FGSLLGVCLGVQILTGLFLAI), 77 to 98 (WLLRYLHANGASMFFICLYLHV), and 113 to 133 (WNIGILLLFAVMATAFMGYVL). Heme b contacts are provided by His-83 and His-97.

The protein belongs to the cytochrome b family. The cytochrome bc1 complex contains 11 subunits: 3 respiratory subunits (MT-CYB, CYC1 and UQCRFS1), 2 core proteins (UQCRC1 and UQCRC2) and 6 low-molecular weight proteins (UQCRH/QCR6, UQCRB/QCR7, UQCRQ/QCR8, UQCR10/QCR9, UQCR11/QCR10 and a cleavage product of UQCRFS1). This cytochrome bc1 complex then forms a dimer. The cofactor is heme b.

Its subcellular location is the mitochondrion inner membrane. Its function is as follows. Component of the ubiquinol-cytochrome c reductase complex (complex III or cytochrome b-c1 complex) that is part of the mitochondrial respiratory chain. The b-c1 complex mediates electron transfer from ubiquinol to cytochrome c. Contributes to the generation of a proton gradient across the mitochondrial membrane that is then used for ATP synthesis. This Platyrrhinus helleri (Heller's broad-nosed bat) protein is Cytochrome b (MT-CYB).